We begin with the raw amino-acid sequence, 1367 residues long: MAP3K epsilon protein kinase 2 (1367 aa).

The region spanning 20-274 (YMLGDEIGKG…AKTLLSHPWI (255 aa)) is the Protein kinase domain. HEAT repeat units follow at residues 25 to 62 (EIGK…EDLN) and 86 to 125 (LKTK…TVYI). ATP is bound by residues 26-34 (IGKGAYGRV) and Lys-49. Asp-144 (proton acceptor) is an active-site residue. The stretch at 218 to 256 (PYYDLQPMPALYRIVQDDTPPIPDSLSPDITDFLRLCFK) is one HEAT 3 repeat. Disordered stretches follow at residues 285-422 (LRHS…GRRN) and 437-513 (SSHS…VADG). Over residues 293-306 (YMKETDSSSEKDAE) the composition is skewed to basic and acidic residues. Positions 351–363 (LGEEGTDSEDDIN) are enriched in acidic residues. Residues 378 to 396 (RQSGTCSISSDAKGTSQDV) are compositionally biased toward polar residues. 2 stretches are compositionally biased toward basic and acidic residues: residues 397–408 (LENHEKYDRDEI) and 475–491 (SLHD…EGKT). Positions 492–507 (NEASTSTPTANVNQGD) are enriched in polar residues. 5 HEAT repeats span residues 538–576 (SQDG…LFPL), 577–614 (QAVE…RPGQ), 633–658 (IPKS…DFLE), 659–700 (NACL…SSPL), and 704–742 (MFIS…VFKL). Residues 792-860 (PRARSGQLDP…LHPDGDRPRL (69 aa)) form a disordered region. Polar residues-rich tracts occupy residues 799–814 (LDPN…TSPS) and 835–845 (ALTSNSQSSDV). Over residues 846–859 (HQPDALHPDGDRPR) the composition is skewed to basic and acidic residues. HEAT repeat units lie at residues 850-888 (ALHP…STDK), 906-943 (DQVR…HESR), 1045-1066 (DYLE…TVKS), 1067-1105 (YMCS…DPNC), 1112-1150 (ADAI…INKR), 1154-1191 (QAAE…ASRN), 1196-1236 (LRAH…KVEQ), 1257-1280 (RHFV…NKTL), 1281-1317 (ALNG…KHPK), and 1347-1367 (QVLV…NTIL).

It belongs to the protein kinase superfamily. Ser/Thr protein kinase family. In terms of processing, autophosphorylated. As to expression, expressed in both the sporophytic and the gametophytic tissues, especially in dividing cells. Mostly present in flower buds and mature flowers. Also accumulates in embryos and in roots.

Its subcellular location is the cytoplasm. It is found in the cytoskeleton. The protein resides in the microtubule organizing center. The protein localises to the nucleus. It localises to the nucleolus. Its subcellular location is the cell membrane. The catalysed reaction is L-seryl-[protein] + ATP = O-phospho-L-seryl-[protein] + ADP + H(+). It carries out the reaction L-threonyl-[protein] + ATP = O-phospho-L-threonyl-[protein] + ADP + H(+). Its function is as follows. Serine/threonine-protein kinase involved in the spatial and temporal control system organizing cortical activities in mitotic and postmitotic cells. Required for the normal functioning of the plasma membrane in developing pollen. Involved in the regulation of cell expansion and embryo development. The protein is MAP3K epsilon protein kinase 2 of Arabidopsis thaliana (Mouse-ear cress).